The sequence spans 277 residues: Shikimate dehydrogenase (NADP(+)) (277 aa).

Residues 15-17 (SLS) and T62 each bind shikimate. Residue K66 is the Proton acceptor of the active site. N87 and D102 together coordinate shikimate. NADP(+) contacts are provided by residues 127-131 (GAGGA), 151-156 (NRTVDK), and I219. Y221 is a shikimate binding site. G242 is an NADP(+) binding site.

The protein belongs to the shikimate dehydrogenase family. Homodimer.

It carries out the reaction shikimate + NADP(+) = 3-dehydroshikimate + NADPH + H(+). It functions in the pathway metabolic intermediate biosynthesis; chorismate biosynthesis; chorismate from D-erythrose 4-phosphate and phosphoenolpyruvate: step 4/7. Functionally, involved in the biosynthesis of the chorismate, which leads to the biosynthesis of aromatic amino acids. Catalyzes the reversible NADPH linked reduction of 3-dehydroshikimate (DHSA) to yield shikimate (SA). The protein is Shikimate dehydrogenase (NADP(+)) of Bacillus cereus (strain 03BB102).